The chain runs to 301 residues: Lipoyl synthase (301 aa).

7 residues coordinate [4Fe-4S] cluster: cysteine 53, cysteine 58, cysteine 64, cysteine 79, cysteine 83, cysteine 86, and serine 290. The region spanning 65–279 is the Radical SAM core domain; that stretch reads WSRKTATYML…RIYGKSIGFK (215 aa).

Belongs to the radical SAM superfamily. Lipoyl synthase family. [4Fe-4S] cluster serves as cofactor.

The protein localises to the cytoplasm. It catalyses the reaction [[Fe-S] cluster scaffold protein carrying a second [4Fe-4S](2+) cluster] + N(6)-octanoyl-L-lysyl-[protein] + 2 oxidized [2Fe-2S]-[ferredoxin] + 2 S-adenosyl-L-methionine + 4 H(+) = [[Fe-S] cluster scaffold protein] + N(6)-[(R)-dihydrolipoyl]-L-lysyl-[protein] + 4 Fe(3+) + 2 hydrogen sulfide + 2 5'-deoxyadenosine + 2 L-methionine + 2 reduced [2Fe-2S]-[ferredoxin]. It participates in protein modification; protein lipoylation via endogenous pathway; protein N(6)-(lipoyl)lysine from octanoyl-[acyl-carrier-protein]: step 2/2. Its function is as follows. Catalyzes the radical-mediated insertion of two sulfur atoms into the C-6 and C-8 positions of the octanoyl moiety bound to the lipoyl domains of lipoate-dependent enzymes, thereby converting the octanoylated domains into lipoylated derivatives. This Leptospira interrogans serogroup Icterohaemorrhagiae serovar Lai (strain 56601) protein is Lipoyl synthase.